Consider the following 212-residue polypeptide: ER lumen protein-retaining receptor 1 (212 aa).

Residues 1–4 (MNIF) are Lumenal-facing. The helical transmembrane segment at 5–24 (RFLGDISHLSAILILLLKIW) threads the bilayer. Over 25-32 (KSRSCAGI) the chain is Cytoplasmic. Residues 33–52 (SGKSQLLFAIVFTTRYLDLF) traverse the membrane as a helical segment. The tract at residues 47–48 (RY) is interaction with the K-D-E-L motif on target proteins. At 53-58 (TNFISL) the chain is on the lumenal side. The chain crosses the membrane as a helical span at residues 59–79 (YNTSMKMVYVASSYATIWMIY). At 80–92 (SKFKATYDGNHDT) the chain is on the cytoplasmic side. Residues 93 to 110 (FRVEFLIVPTAILAFLVN) form a helical membrane-spanning segment. Residues 111 to 116 (HDFTPL) are Lumenal-facing. Residues 117–135 (EILWTFSIYLESVAILPQL) traverse the membrane as a helical segment. At 136–149 (FMVSKTGEAETITS) the chain is on the cytoplasmic side. A helical transmembrane segment spans residues 150–168 (HYLFALGIYRALYLFNWIW). An interaction with the K-D-E-L motif on target proteins region spans residues 159–169 (RALYLFNWIWR). The Lumenal portion of the chain corresponds to 169-178 (RYQFEGFFDL). Residues 179–199 (IAIVAGLVQTVLYCDFFYLYI) form a helical membrane-spanning segment. Residues 200-212 (TKVLKGKKLSLPA) are Cytoplasmic-facing. The segment at 204–207 (KGKK) is important for recycling of cargo proteins with the sequence motif K-D-E-L from the Golgi to the endoplasmic reticulum.

The protein belongs to the ERD2 family.

It is found in the golgi apparatus membrane. It localises to the cytoplasmic vesicle. The protein localises to the COPI-coated vesicle membrane. Its subcellular location is the endoplasmic reticulum membrane. The protein resides in the endoplasmic reticulum-Golgi intermediate compartment membrane. Receptor for the C-terminal sequence motif K-D-E-L that is present on endoplasmic reticulum resident proteins and that mediates their recycling from the Golgi back to the endoplasmic reticulum. This chain is ER lumen protein-retaining receptor 1 (kdelr1), found in Xenopus tropicalis (Western clawed frog).